The primary structure comprises 197 residues: Holliday junction branch migration complex subunit RuvA (197 aa).

The interval 1–65 (MISQVRGTIM…EDAWHLYGFA (65 aa)) is domain I. The domain II stretch occupies residues 66 to 140 (HAYERAVFQK…DKIDAVGPAP (75 aa)). The segment at 140–144 (PATGT) is flexible linker. The segment at 145-197 (APSPLGDDAVRALIALGYNQTEADRAVRAVVESGAPKDVSSLVRGALSRLTAK) is domain III.

The protein belongs to the RuvA family. Homotetramer. Forms an RuvA(8)-RuvB(12)-Holliday junction (HJ) complex. HJ DNA is sandwiched between 2 RuvA tetramers; dsDNA enters through RuvA and exits via RuvB. An RuvB hexamer assembles on each DNA strand where it exits the tetramer. Each RuvB hexamer is contacted by two RuvA subunits (via domain III) on 2 adjacent RuvB subunits; this complex drives branch migration. In the full resolvosome a probable DNA-RuvA(4)-RuvB(12)-RuvC(2) complex forms which resolves the HJ.

The protein localises to the cytoplasm. The RuvA-RuvB-RuvC complex processes Holliday junction (HJ) DNA during genetic recombination and DNA repair, while the RuvA-RuvB complex plays an important role in the rescue of blocked DNA replication forks via replication fork reversal (RFR). RuvA specifically binds to HJ cruciform DNA, conferring on it an open structure. The RuvB hexamer acts as an ATP-dependent pump, pulling dsDNA into and through the RuvAB complex. HJ branch migration allows RuvC to scan DNA until it finds its consensus sequence, where it cleaves and resolves the cruciform DNA. The protein is Holliday junction branch migration complex subunit RuvA of Gemmatimonas aurantiaca (strain DSM 14586 / JCM 11422 / NBRC 100505 / T-27).